A 459-amino-acid polypeptide reads, in one-letter code: Argininosuccinate lyase (459 aa).

Residues Asp440–Pro459 form a disordered region.

It belongs to the lyase 1 family. Argininosuccinate lyase subfamily.

Its subcellular location is the cytoplasm. It catalyses the reaction 2-(N(omega)-L-arginino)succinate = fumarate + L-arginine. Its pathway is amino-acid biosynthesis; L-arginine biosynthesis; L-arginine from L-ornithine and carbamoyl phosphate: step 3/3. This chain is Argininosuccinate lyase, found in Pyrococcus furiosus (strain ATCC 43587 / DSM 3638 / JCM 8422 / Vc1).